The following is a 157-amino-acid chain: uncharacterized protein (157 aa).

The first 28 residues, 1–28, serve as a signal peptide directing secretion; the sequence is MKRLFMKASLVLFAVVFVFAVKGAPAKA.

This is an uncharacterized protein from Bacillus subtilis (strain 168).